The primary structure comprises 709 residues: F-box only protein 40 (709 aa).

The segment at 53-112 (EHQLLCPLEQVPCLNSEYGCPLSMSRHKLAKHLQVCPASVVCCSMEWNRWPNVDSETTLH) adopts a TRAF-type zinc-finger fold. Residues 232 to 280 (TNSSASCESKNKNDSEKEQISSGHNMVEGEGAPKKKEPQENQKQQDVRT) are disordered. Basic and acidic residues-rich tracts occupy residues 240–250 (SKNKNDSEKEQ) and 262–277 (GAPK…KQQD). Residues 570-624 (QNSLTSLPLEILKYIAGFLDSVSLAQLSQVSVLMRNICATLLQERGMVLLQWKKK) enclose the F-box domain.

In terms of assembly, directly interacts with SKP1 and CUL1. Expressed only in heart and skeletal muscle.

The protein localises to the cytoplasm. Probable substrate-recognition component of the SCF (SKP1-CUL1-F-box protein)-type E3 ubiquitin ligase complex that may function in myogenesis. The chain is F-box only protein 40 (FBXO40) from Homo sapiens (Human).